Reading from the N-terminus, the 88-residue chain is UPF0237 protein spr0217 (88 aa).

The 74-residue stretch at 4–77 (IITVVGKDKS…QTLNVKINIQ (74 aa)) folds into the ACT domain.

This sequence belongs to the UPF0237 family. As to quaternary structure, homodimer.

The protein is UPF0237 protein spr0217 of Streptococcus pneumoniae (strain ATCC BAA-255 / R6).